Here is a 287-residue protein sequence, read N- to C-terminus: MSSSMLNFTASRIVSLPLLSSPPSRVHLPLCFFSPISLTQRFSAKLTFSSQATTMGEVVDAGMDAVQRRLMFEDECILVDENDKVVGHESKYNCHLMEKIESENLLHRAFSVFLFNSKYELLLQQRSATKVTFPLVWTNTCCSHPLYRESELIDENCLGVRNAAQRKLLDELGIPAEDLPVDQFIPLSRILYKAPSDGKWGEHELDYLLFIIRDVNLDPNPDEVAEVKYMNRDDLKELLRKADAEEEGVKLSPWFRLVVDNFLFKWWDHVEKGSLKDAADMKTIHKL.

The Nudix hydrolase domain occupies 105 to 257; it reads LLHRAFSVFL…GVKLSPWFRL (153 aa). Catalysis depends on residues Cys142 and Tyr207.

It belongs to the IPP isomerase type 1 family.

It carries out the reaction isopentenyl diphosphate = dimethylallyl diphosphate. The protein operates within isoprenoid biosynthesis; dimethylallyl diphosphate biosynthesis; dimethylallyl diphosphate from isopentenyl diphosphate: step 1/1. Its pathway is porphyrin-containing compound metabolism; chlorophyll biosynthesis. Its function is as follows. Catalyzes the 1,3-allylic rearrangement of the homoallylic substrate isopentenyl (IPP) to its highly electrophilic allylic isomer, dimethylallyl diphosphate (DMAPP). This is Isopentenyl-diphosphate Delta-isomerase I (IPI1) from Clarkia breweri (Fairy fans).